A 146-amino-acid polypeptide reads, in one-letter code: Small ribosomal subunit protein bS16 (146 aa).

Residues 84–102 show a composition bias toward basic and acidic residues; the sequence is SHLEAQKAAVERLGRRKDY. The segment at 84 to 146 is disordered; the sequence is SHLEAQKAAV…DAPAAEATTE (63 aa). A compositionally biased stretch (low complexity) spans 110-119; sequence APKAAPVAEA. A compositionally biased stretch (acidic residues) spans 120–130; the sequence is PAEEAPAEEPA. Residues 131–146 show a composition bias toward low complexity; that stretch reads AEASTDDAPAAEATTE.

The protein belongs to the bacterial ribosomal protein bS16 family.

This Rhodopirellula baltica (strain DSM 10527 / NCIMB 13988 / SH1) protein is Small ribosomal subunit protein bS16.